We begin with the raw amino-acid sequence, 126 residues long: uncharacterized protein (126 aa).

This is an uncharacterized protein from Rickettsia prowazekii (strain Madrid E).